A 377-amino-acid polypeptide reads, in one-letter code: Chaperone protein DnaJ (377 aa).

Residues 5-70 enclose the J domain; sequence DYYEVLGLQK…QKRAAYDQYG (66 aa). The segment at 134–212 adopts a CR-type zinc-finger fold; that stretch reads GCKKDIRLST…CHGDGRVQKA (79 aa). The Zn(2+) site is built by Cys-147, Cys-150, Cys-164, Cys-167, Cys-186, Cys-189, Cys-200, and Cys-203. 4 CXXCXGXG motif repeats span residues 147–154, 164–171, 186–193, and 200–207; these read CDNCHGTG, CPHCHGAG, CPSCHGTG, and CHSCHGDG.

The protein belongs to the DnaJ family. In terms of assembly, homodimer. It depends on Zn(2+) as a cofactor.

It is found in the cytoplasm. Its function is as follows. Participates actively in the response to hyperosmotic and heat shock by preventing the aggregation of stress-denatured proteins and by disaggregating proteins, also in an autonomous, DnaK-independent fashion. Unfolded proteins bind initially to DnaJ; upon interaction with the DnaJ-bound protein, DnaK hydrolyzes its bound ATP, resulting in the formation of a stable complex. GrpE releases ADP from DnaK; ATP binding to DnaK triggers the release of the substrate protein, thus completing the reaction cycle. Several rounds of ATP-dependent interactions between DnaJ, DnaK and GrpE are required for fully efficient folding. Also involved, together with DnaK and GrpE, in the DNA replication of plasmids through activation of initiation proteins. The polypeptide is Chaperone protein DnaJ (Haemophilus ducreyi (strain 35000HP / ATCC 700724)).